Consider the following 579-residue polypeptide: MIVSPHKASRIPGNRLRKALMASAALVGLMSAGQLWAFNLDDVAAKAKDLAGQKYEAPKSNLPAVFRDMKFADYQKIRFLQEKAEWAKDKTPFKLSFYHQGMHFDTPVKINEVTATTVEEIKYDPSRFEFGDVPHDPETTKNLGYAGFRVLYPINKADKQDEIMTLLGASYFRVVGKGHVYGLSARGLAIDTALPSGEEFPRFTEFWVEKPKPADKHLVIYALLDSPRSTGAYKLILRPGNDTVVDVQSRVFLRDHVSRLGIAPLTSMYLFGPNQPSKVMNYRPALHDSEGLSIHAGNGEWLWRPLNNPKHLSVSNFSVENPRGFGLMQRHRDFKDYEDLDDNYQKRPSAWIEPKGDWGKGTVDLVEIPTADETNDNIVAFWSPETLPEPGKPFEYDYRMHWTIDESRFQAQELGSVTQTMRSTGDVKQSNLIRQPDGSVAFLVDFAGPALAALPEDAAVRSQISVGDNAEVVENNLRYNPETKGWRLTLRMKIKEANKATEMRAALVRDVPVEAAKPAEEAKHDKTAAKHGKAEKAAKAEQSANAEQPAADAASTNGTPATTEKVLTETWSYQLPADE.

The signal sequence occupies residues 1–37 (MIVSPHKASRIPGNRLRKALMASAALVGLMSAGQLWA). Residues 516–579 (AKPAEEAKHD…TWSYQLPADE (64 aa)) are disordered. The span at 517-539 (KPAEEAKHDKTAAKHGKAEKAAK) shows a compositional bias: basic and acidic residues.

The protein belongs to the OpgD/OpgG family.

It is found in the periplasm. The protein operates within glycan metabolism; osmoregulated periplasmic glucan (OPG) biosynthesis. Involved in the biosynthesis of osmoregulated periplasmic glucans (OPGs). In Pseudomonas putida (strain W619), this protein is Glucans biosynthesis protein G.